The sequence spans 538 residues: Cytosolic Fe-S cluster assembly factor NAR1 homolog (538 aa).

[4Fe-4S] cluster contacts are provided by cysteine 19, cysteine 64, cysteine 67, cysteine 70, cysteine 218, cysteine 273, cysteine 453, and cysteine 457.

It belongs to the NARF family.

It is found in the cytoplasm. It localises to the nucleus. Its function is as follows. Component of the cytosolic Fe/S protein assembly machinery. Required for maturation of extramitochondrial Fe/S proteins. May play a role in the transfer of pre-assembled Fe/S clusters to target apoproteins. This Schizosaccharomyces pombe (strain 972 / ATCC 24843) (Fission yeast) protein is Cytosolic Fe-S cluster assembly factor NAR1 homolog.